We begin with the raw amino-acid sequence, 372 residues long: 3-galactosyl-N-acetylglucosaminide 4-alpha-L-fucosyltransferase FUT3 (372 aa).

Over 1 to 15 (MDPLGAAKTQWPWRR) the chain is Cytoplasmic. Residues 16 to 34 (CLAALLFQLLVAVCFFSYL) traverse the membrane as a helical; Signal-anchor for type II membrane protein segment. The Lumenal segment spans residues 35–372 (RVSRDDATGS…MVRSIAAWFT (338 aa)). Positions 40 to 68 (DATGSPRPGLMAVEPVTGAPGGSSRQDTT) are disordered. N-linked (GlcNAc...) asparagine glycosylation is found at Asn-165 and Asn-196.

Belongs to the glycosyltransferase 10 family. In terms of processing, glycosylated.

It localises to the golgi apparatus. It is found in the golgi stack membrane. It catalyses the reaction a beta-D-galactosyl-(1-&gt;3)-N-acetyl-beta-D-glucosaminyl derivative + GDP-beta-L-fucose = a beta-D-galactosyl-(1-&gt;3)-[alpha-L-fucosyl-(1-&gt;4)]-N-acetyl-beta-D-glucosaminyl derivative + GDP + H(+). The enzyme catalyses an N-acetyl-alpha-neuraminyl-(2-&gt;3)-beta-D-galactosyl-(1-&gt;4)-N-acetyl-beta-D-glucosaminyl derivative + GDP-beta-L-fucose = an alpha-Neu5Ac-(2-&gt;3)-beta-D-Gal-(1-&gt;4)-[alpha-L-Fuc-(1-&gt;3)]-beta-D-GlcNAc derivative + GDP + H(+). The catalysed reaction is a beta-D-galactosyl-(1-&gt;4)-N-acetyl-beta-D-glucosaminyl derivative + GDP-beta-L-fucose = a beta-D-galactosyl-(1-&gt;4)-[alpha-L-fucosyl-(1-&gt;3)]-N-acetyl-beta-D-glucosaminyl derivative + GDP + H(+). It carries out the reaction an alpha-Neu5Ac-(2-&gt;3)-beta-D-Gal-(1-&gt;4)-beta-D-GlcNAc-(1-&gt;3)-beta-D-Gal-(1-&gt;4)-[alpha-L-Fuc-(1-&gt;3)]-beta-D-GlcNAc derivative + GDP-beta-L-fucose = an alpha-Neu5Ac-(2-&gt;3)-beta-D-Gal-(1-&gt;4)-[alpha-L-Fuc-(1-&gt;3)]-beta-D-GlcNAc-(1-&gt;3)-beta-D-Gal-(1-&gt;4)-[alpha-L-Fuc-(1-&gt;3)]-beta-D-GlcNAc derivative + GDP + H(+). It catalyses the reaction Lc4Cer + GDP-beta-L-fucose = a lactoside III(4)-a-Fuc-Lc4Cer + GDP + H(+). The enzyme catalyses a beta-D-Gal-(1-&gt;3)-beta-D-GlcNAc-(1-&gt;3)-beta-D-Gal-(1-&gt;4)-beta-D-Glc-(1&lt;-&gt;1')-Cer(d18:1(4E)) + GDP-beta-L-fucose = a III(4)-a-Fuc-Lc4Cer(d18:1(4E)) + GDP + H(+). The catalysed reaction is N-acetyl-alpha-neuraminosyl-(2-&gt;3)-beta-D-galactosyl-(1-&gt;3)-[N-acetyl-alpha-neuraminosyl-(2-&gt;6)]-N-acetyl-beta-D-glucosaminyl-(1-&gt;3)-beta-D-galactosyl-(1-&gt;4)-beta-D-glucosyl-(1&lt;-&gt;1')-N-acyl-sphing-4-enine + GDP-beta-L-fucose = N-acetyl-alpha-neuraminosyl-(2-&gt;3)-beta-D-galactosyl-(1-&gt;3)-alpha-L-fucosyl-(1-&gt;4)-[N-acetyl-alpha-neuraminosyl-(2-&gt;6)-N-acetyl-beta-D-glucosaminyl-(1-&gt;3)]-beta-D-galactosyl-(1-&gt;4)-beta-D-glucosyl-(1&lt;-&gt;1')-N-acyl-sphing-4-enine + GDP + H(+). It carries out the reaction N-acetyl-alpha-neuraminosyl-(2-&gt;3)-beta-D-galactosyl-(1-&gt;3)-N-acetyl-beta-D-glucosaminyl-(1-&gt;3)-beta-D-galactosyl-(1-&gt;4)-beta-D-glucosyl-(1&lt;-&gt;1')-N-acyl-sphing-4-enine + GDP-beta-L-fucose = N-acetyl-alpha-neuraminosyl-(2-&gt;3)-beta-D-galactosyl-(1-&gt;3)-alpha-L-fucosyl-(1-&gt;4)-[N-acetyl-beta-D-glucosaminyl-(1-&gt;3)]-beta-D-galactosyl-(1-&gt;4)-beta-D-glucosyl-(1&lt;-&gt;1')-N-acyl-sphing-4-enine + GDP + H(+). It catalyses the reaction beta-D-galactosyl-(1-&gt;3)-N-acetyl-D-glucosamine + GDP-beta-L-fucose = beta-D-galactosyl-(1-&gt;3)-[alpha-L-fucosyl-(1-&gt;4)]-N-acetyl-D-glucosamine + GDP + H(+). The enzyme catalyses alpha-L-Fuc-(1-&gt;2)-beta-D-Gal-(1-&gt;3)-D-GlcNAc + GDP-beta-L-fucose = alpha-L-Fuc-(1-&gt;2)-beta-D-Gal-(1-&gt;3)-[alpha-L-Fuc-(1-&gt;4)]-D-GlcNAc + GDP + H(+). The catalysed reaction is alpha-L-Fuc-(1-&gt;2)-beta-D-Gal-(1-&gt;4)-D-GlcNAc + GDP-beta-L-fucose = alpha-L-Fuc-(1-&gt;2)-beta-D-Gal-(1-&gt;4)-[alpha-L-Fuc-(1-&gt;3)]-D-GlcNAc + GDP + H(+). It carries out the reaction beta-D-galactosyl-(1-&gt;4)-N-acetyl-D-glucosamine + GDP-beta-L-fucose = beta-D-galactosyl-(1-&gt;4)-[alpha-L-fucosyl-(1-&gt;3)]-N-acetyl-D-glucosamine + GDP + H(+). It catalyses the reaction lactose + GDP-beta-L-fucose = beta-D-galactosyl-(1-&gt;4)-[alpha-L-fucosyl-(1-&gt;3)]-D-glucose + GDP + H(+). The enzyme catalyses an alpha-Neu5Ac-(2-&gt;3)-beta-D-Gal-(1-&gt;3)-D-GlcNAc derivative + GDP-beta-L-fucose = an alpha-Neu5Ac-(2-&gt;3)-beta-D-Gal-(1-&gt;3)-[alpha-L-Fuc-(1-&gt;4)]-beta-D-GlcNAc derivative + GDP + H(+). It functions in the pathway protein modification; protein glycosylation. Catalyzes the transfer of L-fucose, from a guanosine diphosphate-beta-L-fucose, to both the subterminal N-acetyl glucosamine (GlcNAc) of type 1 chain (beta-D-Gal-(1-&gt;3)-beta-D-GlcNAc) glycolipids and oligosaccharides via an alpha(1,4) linkage, and the subterminal glucose (Glc) or GlcNAc of type 2 chain (beta-D-Gal-(1-&gt;4)-beta-D-GlcNAc) oligosaccharides via an alpha(1,3) linkage, independently of the presence of terminal alpha-L-fucosyl-(1,2) moieties on the terminal galactose of these acceptors and participates in the blood groups Lewis determination and expression of Lewis a (Le(a)), lewis b (Le(b)), Lewis x/SSEA-1 (Le(x)) and lewis y (Le(y)) antigens. Also catalyzes the transfer of L-fucose to subterminal GlcNAc of sialyl- and disialyl-lactotetraosylceramide to produce sialyl Lewis a (sLe(a)) and disialyl Lewis a via an alpha(1,4) linkage and therefore may regulate cell surface sialyl Lewis a expression and consequently regulates adhesive properties to E-selectin, cell proliferation and migration. Catalyzes the transfer of an L-fucose to 3'-sialyl-N-acetyllactosamine by an alpha(1,3) linkage, which allows the formation of sialyl-Lewis x structure and therefore may regulate the sialyl-Lewis x surface antigen expression and consequently adhesive properties to E-selectin. Prefers type 1 chain over type 2 acceptors. Type 1 tetrasaccharide is a better acceptor than type 1 disaccharide suggesting that a beta anomeric configuration of GlcNAc in the substrate is preferred. Lewis-positive (Le(+)) individuals have an active enzyme while Lewis-negative (Le(-)) individuals have an inactive enzyme. The chain is 3-galactosyl-N-acetylglucosaminide 4-alpha-L-fucosyltransferase FUT3 from Pongo pygmaeus (Bornean orangutan).